Consider the following 217-residue polypeptide: Histone H1-gamma, late (217 aa).

Disordered stretches follow at residues methionine 1–serine 21 and glycine 80–lysine 217. In terms of domain architecture, H15 spans alanine 17–lysine 91. A compositionally biased stretch (basic residues) spans isoleucine 104–alanine 113. The span at lysine 114–alanine 123 shows a compositional bias: basic and acidic residues. The segment covering leucine 124 to lysine 217 has biased composition (basic residues).

Belongs to the histone H1/H5 family.

The protein resides in the nucleus. Its subcellular location is the chromosome. In terms of biological role, histones H1 are necessary for the condensation of nucleosome chains into higher-order structures. The chain is Histone H1-gamma, late from Strongylocentrotus purpuratus (Purple sea urchin).